Reading from the N-terminus, the 178-residue chain is Ribulose bisphosphate carboxylase small subunit, chloroplastic 2 (178 aa).

The N-terminal 54 residues, 1–54 (MASISSTVATVSRAAPAQANMVAPFTGLKSNVAFPATKKANDFSTLPSNGGRVQ), are a transit peptide targeting the chloroplast.

The protein belongs to the RuBisCO small chain family. As to quaternary structure, heterohexadecamer of 8 large and 8 small subunits.

It localises to the plastid. The protein resides in the chloroplast. Functionally, ruBisCO catalyzes two reactions: the carboxylation of D-ribulose 1,5-bisphosphate, the primary event in carbon dioxide fixation, as well as the oxidative fragmentation of the pentose substrate. Both reactions occur simultaneously and in competition at the same active site. Although the small subunit is not catalytic it is essential for maximal activity. The chain is Ribulose bisphosphate carboxylase small subunit, chloroplastic 2 from Flaveria pringlei.